Reading from the N-terminus, the 359-residue chain is Doublesex- and mab-3-related transcription factor B1 (359 aa).

The DM DNA-binding region spans 7–54 (CSRCRNHGYLVPVKGHTGKCRWKQCICDKCYLITERQKIMAAQKVLRT). 2 disordered regions span residues 111-149 (PPQAPSPGPSTFQLGPSGRPGPSTFQPGPGAPGGLRDRS) and 262-359 (SGLV…EQSN). Composition is skewed to pro residues over residues 277–299 (CSPPPPPPPPPPPPLPAPPPQPQ) and 315–325 (LPPPPPPPSPP). The segment covering 348–359 (EPSQDSPQEQSN) has biased composition (polar residues).

It belongs to the DMRT family. In terms of tissue distribution, brain.

It localises to the nucleus. In Mus musculus (Mouse), this protein is Doublesex- and mab-3-related transcription factor B1 (Dmrtb1).